The chain runs to 127 residues: Large ribosomal subunit protein bL20c (127 aa).

This sequence belongs to the bacterial ribosomal protein bL20 family.

The protein resides in the plastid. The protein localises to the chloroplast. Its function is as follows. Binds directly to 23S ribosomal RNA and is necessary for the in vitro assembly process of the 50S ribosomal subunit. It is not involved in the protein synthesizing functions of that subunit. The chain is Large ribosomal subunit protein bL20c from Jasminum nudiflorum (Winter jasmine).